The primary structure comprises 247 residues: Carboxy-S-adenosyl-L-methionine synthase (247 aa).

S-adenosyl-L-methionine is bound by residues Tyr39, 64–66, 89–90, 117–118, Asn132, and Arg199; these read GCS, DN, and DI.

The protein belongs to the class I-like SAM-binding methyltransferase superfamily. Cx-SAM synthase family. In terms of assembly, homodimer.

It carries out the reaction prephenate + S-adenosyl-L-methionine = carboxy-S-adenosyl-L-methionine + 3-phenylpyruvate + H2O. Its function is as follows. Catalyzes the conversion of S-adenosyl-L-methionine (SAM) to carboxy-S-adenosyl-L-methionine (Cx-SAM). This is Carboxy-S-adenosyl-L-methionine synthase from Klebsiella pneumoniae (strain 342).